The primary structure comprises 75 residues: MARYFRRRKFCRFTAEGVTEIDYKDIVTLKNYITESGKIVPSRITGTNAKYQRQLARAIKRARYLSLLPYTDLHQ.

Belongs to the bacterial ribosomal protein bS18 family. As to quaternary structure, part of the 30S ribosomal subunit. Forms a tight heterodimer with protein bS6.

In terms of biological role, binds as a heterodimer with protein bS6 to the central domain of the 16S rRNA, where it helps stabilize the platform of the 30S subunit. The protein is Small ribosomal subunit protein bS18 of Shewanella halifaxensis (strain HAW-EB4).